Reading from the N-terminus, the 296-residue chain is Light-independent protochlorophyllide reductase iron-sulfur ATP-binding protein (296 aa).

ATP contacts are provided by residues glycine 10–threonine 15 and lysine 39. Serine 14 contributes to the Mg(2+) binding site. [4Fe-4S] cluster-binding residues include cysteine 95 and cysteine 129. Asparagine 180–arginine 181 is an ATP binding site.

This sequence belongs to the NifH/BchL/ChlL family. As to quaternary structure, homodimer. Protochlorophyllide reductase is composed of three subunits; ChlL, ChlN and ChlB. It depends on [4Fe-4S] cluster as a cofactor.

It localises to the plastid. It is found in the chloroplast. It carries out the reaction chlorophyllide a + oxidized 2[4Fe-4S]-[ferredoxin] + 2 ADP + 2 phosphate = protochlorophyllide a + reduced 2[4Fe-4S]-[ferredoxin] + 2 ATP + 2 H2O. Its pathway is porphyrin-containing compound metabolism; chlorophyll biosynthesis (light-independent). Component of the dark-operative protochlorophyllide reductase (DPOR) that uses Mg-ATP and reduced ferredoxin to reduce ring D of protochlorophyllide (Pchlide) to form chlorophyllide a (Chlide). This reaction is light-independent. The L component serves as a unique electron donor to the NB-component of the complex, and binds Mg-ATP. In Chlorokybus atmophyticus (Soil alga), this protein is Light-independent protochlorophyllide reductase iron-sulfur ATP-binding protein.